We begin with the raw amino-acid sequence, 573 residues long: Mitochondrial distribution and morphology protein 34 (573 aa).

An SMP-LTD domain is found at 1–195 (MAFNFNWSPL…LPAIIHRLSL (195 aa)). Disordered regions lie at residues 301–326 (EGLG…SSPL), 349–433 (FSGY…RFPN), 499–521 (SREK…ITDA), and 550–573 (LVNN…AYGQ). Over residues 306 to 316 (GLMSPGSPALS) the composition is skewed to low complexity. The segment covering 360–373 (RHTKARPTKKRKKR) has biased composition (basic residues). Positions 374–385 (VVDLRKQSKPTD) are enriched in basic and acidic residues. Residues 396-409 (TETSTASTTFSSST) show a composition bias toward low complexity.

It belongs to the MDM34 family. As to quaternary structure, component of the ER-mitochondria encounter structure (ERMES) or MDM complex, composed of MMM1, MDM10, MDM12 and MDM34.

It localises to the mitochondrion outer membrane. Component of the ERMES/MDM complex, which serves as a molecular tether to connect the endoplasmic reticulum (ER) and mitochondria. Components of this complex are involved in the control of mitochondrial shape and protein biogenesis, and function in nonvesicular lipid trafficking between the ER and mitochondria. MDM34 is required for the interaction of the ER-resident membrane protein MMM1 and the outer mitochondrial membrane-resident beta-barrel protein MDM10. The sequence is that of Mitochondrial distribution and morphology protein 34 from Uncinocarpus reesii (strain UAMH 1704).